The sequence spans 281 residues: Probable endonuclease 4 (281 aa).

Zn(2+)-binding residues include His-78, His-118, Glu-149, Asp-181, His-184, His-216, Asp-229, His-231, and Glu-260.

The protein belongs to the AP endonuclease 2 family. Zn(2+) is required as a cofactor.

The enzyme catalyses Endonucleolytic cleavage to 5'-phosphooligonucleotide end-products.. Endonuclease IV plays a role in DNA repair. It cleaves phosphodiester bonds at apurinic or apyrimidinic (AP) sites, generating a 3'-hydroxyl group and a 5'-terminal sugar phosphate. The sequence is that of Probable endonuclease 4 from Thermoplasma acidophilum (strain ATCC 25905 / DSM 1728 / JCM 9062 / NBRC 15155 / AMRC-C165).